The primary structure comprises 466 residues: Vacuolar-processing enzyme delta-isozyme (466 aa).

A signal peptide spans 1–24; the sequence is MSSPLGHFQILVFLHALLIFSAES. Asn137 carries an N-linked (GlcNAc...) asparagine glycan. Residue His164 is part of the active site. Cys206 functions as the Nucleophile in the catalytic mechanism. An intrachain disulfide couples Cys239 to Cys253. An N-linked (GlcNAc...) asparagine glycan is attached at Asn322. 2 disulfide bridges follow: Cys417-Cys447 and Cys429-Cys464.

This sequence belongs to the peptidase C13 family. In terms of processing, auto-catalytic activation. Seed specific. Restricted to developing seeds at 7 days after anthesis, and, at lower levels, detected in flowers. Detected in siliques, specifically in seed coats (at protein level).

It localises to the secreted. The protein localises to the extracellular space. The protein resides in the cell wall. It is found in the vacuole. The enzyme catalyses Hydrolysis of proteins and small molecule substrates at -Asn-|-Xaa- bonds.. Its activity is regulated as follows. Strongly inhibited by biotin-YVAD-fmk (a caspase-1 inhibitor) and by Ac-DEVD-fmk. Asparagine-specific endopeptidase that may be involved in processing of proteins targeted to vacuoles. Probably involved in post-translational proteolysis of seed storage proteins in the protein storage vacuole of developing seeds. Exhibits a caspase-1-like activity in extracellular granules. At the early stage of seed development, required for the formation of the seed coat, by regulating cell death of specific cell layers in inner integument. In Arabidopsis thaliana (Mouse-ear cress), this protein is Vacuolar-processing enzyme delta-isozyme.